A 300-amino-acid chain; its full sequence is Porphobilinogen deaminase (300 aa).

Residue C239 is modified to S-(dipyrrolylmethanemethyl)cysteine.

The protein belongs to the HMBS family. Monomer. Dipyrromethane serves as cofactor.

The enzyme catalyses 4 porphobilinogen + H2O = hydroxymethylbilane + 4 NH4(+). It participates in porphyrin-containing compound metabolism; protoporphyrin-IX biosynthesis; coproporphyrinogen-III from 5-aminolevulinate: step 2/4. In terms of biological role, tetrapolymerization of the monopyrrole PBG into the hydroxymethylbilane pre-uroporphyrinogen in several discrete steps. The sequence is that of Porphobilinogen deaminase from Francisella philomiragia subsp. philomiragia (strain ATCC 25017 / CCUG 19701 / FSC 153 / O#319-036).